A 507-amino-acid polypeptide reads, in one-letter code: ATP synthase subunit alpha, chloroplastic (507 aa).

Gly170 to Thr177 lines the ATP pocket.

Belongs to the ATPase alpha/beta chains family. In terms of assembly, F-type ATPases have 2 components, CF(1) - the catalytic core - and CF(0) - the membrane proton channel. CF(1) has five subunits: alpha(3), beta(3), gamma(1), delta(1), epsilon(1). CF(0) has four main subunits: a, b, b' and c.

It localises to the plastid. The protein resides in the chloroplast thylakoid membrane. It carries out the reaction ATP + H2O + 4 H(+)(in) = ADP + phosphate + 5 H(+)(out). Functionally, produces ATP from ADP in the presence of a proton gradient across the membrane. The alpha chain is a regulatory subunit. The polypeptide is ATP synthase subunit alpha, chloroplastic (Daucus carota (Wild carrot)).